The primary structure comprises 158 residues: Ribonuclease H (158 aa).

The 142-residue stretch at 3-144 folds into the RNase H type-1 domain; the sequence is ELKLIHIFTD…CDQLARAAAE (142 aa). Residues aspartate 12, glutamate 50, aspartate 72, and aspartate 136 each coordinate Mg(2+).

Belongs to the RNase H family. Monomer. The cofactor is Mg(2+).

Its subcellular location is the cytoplasm. It catalyses the reaction Endonucleolytic cleavage to 5'-phosphomonoester.. Endonuclease that specifically degrades the RNA of RNA-DNA hybrids. The protein is Ribonuclease H of Shewanella sp. (strain MR-4).